A 293-amino-acid chain; its full sequence is Ribosomal protein L11 methyltransferase (293 aa).

Residues Thr145, Gly166, Asp188, and Asn230 each contribute to the S-adenosyl-L-methionine site.

The protein belongs to the methyltransferase superfamily. PrmA family.

It localises to the cytoplasm. The enzyme catalyses L-lysyl-[protein] + 3 S-adenosyl-L-methionine = N(6),N(6),N(6)-trimethyl-L-lysyl-[protein] + 3 S-adenosyl-L-homocysteine + 3 H(+). Methylates ribosomal protein L11. The protein is Ribosomal protein L11 methyltransferase of Actinobacillus pleuropneumoniae serotype 5b (strain L20).